Consider the following 1323-residue polypeptide: PH domain leucine-rich repeat-containing protein phosphatase 2 (1323 aa).

The PH domain occupies R150 to S248. LRR repeat units follow at residues R250–S271, D273–Y296, Q300–I321, T323–L344, N346–Q368, Q369–L390, M392–N412, H416–K439, H440–C460, S461–F480, S481–S502, L503–A524, K526–S547, S549–I570, P571–K592, N595–E616, M621–L644, H645–K666, Q669–C690, R692–P713, Q714–P735, and T737–I758. The 249-residue stretch at S785–L1033 folds into the PPM-type phosphatase domain. Positions 820, 821, 985, and 1024 each coordinate Mn(2+). Residues T1060–G1157 are disordered. Residues S1071–A1097 are compositionally biased toward low complexity. Residues P1122–G1146 show a composition bias toward polar residues. Phosphoserine is present on S1210. Residues H1285–L1323 are disordered. The span at K1292 to P1315 shows a compositional bias: basic and acidic residues.

As to quaternary structure, interacts with AKT1, AKT3 and PRKCB isoform beta-II. Interacts with STK4, RPS6KB1, RAF1. Interacts with FKBP5; FKBP5 acts as a scaffold for PHLPP2 and Akt. Interacts with NHERF1; NHERF1 scaffolds a heterotrimeric complex with PTEN. Mn(2+) is required as a cofactor. As to expression, in colorectal cancer tissue, expression is highest in the surface epithelium of normal colonic mucosa adjacent to the cancer tissue but is largely excluded from the crypt bases. Expression is lost or significantly decreased in 80% of tested tumors (at protein level).

Its subcellular location is the cytoplasm. The protein resides in the membrane. The protein localises to the nucleus. It carries out the reaction O-phospho-L-seryl-[protein] + H2O = L-seryl-[protein] + phosphate. The catalysed reaction is O-phospho-L-threonyl-[protein] + H2O = L-threonyl-[protein] + phosphate. Inhibited by AKT1, AKT2 and AKT3. Activated by oleic acid and arachidonic acid. In terms of biological role, protein phosphatase involved in regulation of Akt and PKC signaling. Mediates dephosphorylation in the C-terminal domain hydrophobic motif of members of the AGC Ser/Thr protein kinase family; specifically acts on 'Ser-473' of AKT1, 'Ser-660' of PRKCB isoform beta-II and 'Ser-657' of PRKCA. Akt regulates the balance between cell survival and apoptosis through a cascade that primarily alters the function of transcription factors that regulate pro- and antiapoptotic genes. Dephosphorylation of 'Ser-473' of Akt triggers apoptosis and decreases cell proliferation. Also controls the phosphorylation of AKT3. Dephosphorylates STK4 on 'Thr-387' leading to STK4 activation and apoptosis. Dephosphorylates RPS6KB1 and is involved in regulation of cap-dependent translation. Inhibits cancer cell proliferation and may act as a tumor suppressor. Dephosphorylation of PRKCA and PRKCB leads to their destabilization and degradation. Dephosphorylates RAF1 inhibiting its kinase activity. The polypeptide is PH domain leucine-rich repeat-containing protein phosphatase 2 (PHLPP2) (Homo sapiens (Human)).